Consider the following 208-residue polypeptide: Protein-L-isoaspartate O-methyltransferase (208 aa).

Ser-59 is an active-site residue.

The protein belongs to the methyltransferase superfamily. L-isoaspartyl/D-aspartyl protein methyltransferase family.

Its subcellular location is the cytoplasm. It catalyses the reaction [protein]-L-isoaspartate + S-adenosyl-L-methionine = [protein]-L-isoaspartate alpha-methyl ester + S-adenosyl-L-homocysteine. In terms of biological role, catalyzes the methyl esterification of L-isoaspartyl residues in peptides and proteins that result from spontaneous decomposition of normal L-aspartyl and L-asparaginyl residues. It plays a role in the repair and/or degradation of damaged proteins. This chain is Protein-L-isoaspartate O-methyltransferase, found in Aliivibrio fischeri (strain MJ11) (Vibrio fischeri).